A 629-amino-acid chain; its full sequence is tRNA uridine 5-carboxymethylaminomethyl modification enzyme MnmG (629 aa).

Residues 13–18 (GGGHAG), Val-125, and Ser-180 contribute to the FAD site. Residue 273 to 287 (GPRYCPSIEDKVMRF) participates in NAD(+) binding. An FAD-binding site is contributed by Gln-370.

It belongs to the MnmG family. As to quaternary structure, homodimer. Heterotetramer of two MnmE and two MnmG subunits. FAD serves as cofactor.

It localises to the cytoplasm. Its function is as follows. NAD-binding protein involved in the addition of a carboxymethylaminomethyl (cmnm) group at the wobble position (U34) of certain tRNAs, forming tRNA-cmnm(5)s(2)U34. The chain is tRNA uridine 5-carboxymethylaminomethyl modification enzyme MnmG from Pasteurella multocida (strain Pm70).